Consider the following 178-residue polypeptide: Interleukin-10 (178 aa).

The first 18 residues, 1 to 18 (MPNPVLLYCLVLLAGMGT), serve as a signal peptide directing secretion. Disulfide bonds link Cys30–Cys126 and Cys80–Cys132. An N-linked (GlcNAc...) asparagine glycan is attached at Asn134.

This sequence belongs to the IL-10 family. In terms of assembly, homodimer. Interacts with IL10RA and IL10RB.

It localises to the secreted. In terms of biological role, major immune regulatory cytokine that acts on many cells of the immune system where it has profound anti-inflammatory functions, limiting excessive tissue disruption caused by inflammation. Mechanistically, IL10 binds to its heterotetrameric receptor comprising IL10RA and IL10RB leading to JAK1 and STAT2-mediated phosphorylation of STAT3. In turn, STAT3 translocates to the nucleus where it drives expression of anti-inflammatory mediators. Targets antigen-presenting cells (APCs) such as macrophages and monocytes and inhibits their release of pro-inflammatory cytokines including granulocyte-macrophage colony-stimulating factor /GM-CSF, granulocyte colony-stimulating factor/G-CSF, IL-1 alpha, IL-1 beta, IL-6, IL-8 and TNF-alpha. Also interferes with antigen presentation by reducing the expression of MHC-class II and co-stimulatory molecules, thereby inhibiting their ability to induce T cell activation. In addition, controls the inflammatory response of macrophages by reprogramming essential metabolic pathways including mTOR signaling. The protein is Interleukin-10 (IL10) of Marmota monax (Woodchuck).